A 121-amino-acid polypeptide reads, in one-letter code: N-alpha-acetyltransferase 38, NatC auxiliary subunit (121 aa).

The region spanning 40 to 113 (PGRRKLQKWL…IVSLSIDEPD (74 aa)) is the Sm domain.

This sequence belongs to the snRNP Sm proteins family. Component of the N-terminal acetyltransferase C (NatC) complex, which is composed of Naa35, Sbat/Naa38 and Naa30A. Interacts with Smn and Hez; along with Hez and Vlet, may form an accessory subcomplex involved in SMN complex function.

The protein localises to the cytoplasm. The protein resides in the nucleus. Its function is as follows. Auxiliary component of the N-terminal acetyltransferase C (NatC) complex which catalyzes acetylation of N-terminal methionine residues. May have an accessory function in the survival motor neuron (SMN) complex. The chain is N-alpha-acetyltransferase 38, NatC auxiliary subunit from Drosophila melanogaster (Fruit fly).